Reading from the N-terminus, the 211-residue chain is tRNA (guanine-N(7)-)-methyltransferase (211 aa).

The S-adenosyl-L-methionine site is built by glutamate 43, glutamate 68, aspartate 95, and aspartate 117. The active site involves aspartate 117. Substrate is bound by residues lysine 121, aspartate 153, and 190–193 (TEYE).

It belongs to the class I-like SAM-binding methyltransferase superfamily. TrmB family.

The enzyme catalyses guanosine(46) in tRNA + S-adenosyl-L-methionine = N(7)-methylguanosine(46) in tRNA + S-adenosyl-L-homocysteine. Its pathway is tRNA modification; N(7)-methylguanine-tRNA biosynthesis. In terms of biological role, catalyzes the formation of N(7)-methylguanine at position 46 (m7G46) in tRNA. This is tRNA (guanine-N(7)-)-methyltransferase from Staphylococcus carnosus (strain TM300).